A 115-amino-acid polypeptide reads, in one-letter code: Probable 4-amino-4-deoxy-L-arabinose-phosphoundecaprenol flippase subunit ArnE (115 aa).

3 helical membrane passes run Pro-42–Leu-62, Val-65–Ala-85, and Val-93–Gly-112. The EamA domain maps to Leu-46–Arg-113.

This sequence belongs to the ArnE family. As to quaternary structure, heterodimer of ArnE and ArnF.

It localises to the cell inner membrane. Its pathway is bacterial outer membrane biogenesis; lipopolysaccharide biosynthesis. Its function is as follows. Translocates 4-amino-4-deoxy-L-arabinose-phosphoundecaprenol (alpha-L-Ara4N-phosphoundecaprenol) from the cytoplasmic to the periplasmic side of the inner membrane. This chain is Probable 4-amino-4-deoxy-L-arabinose-phosphoundecaprenol flippase subunit ArnE, found in Pseudomonas aeruginosa (strain LESB58).